We begin with the raw amino-acid sequence, 58 residues long: MMNATENQIFVETVSDQELEMLIGGADRGWIKTLTKDCPNVISSICAGTIITACKNCA.

A propeptide spanning residues 1–25 (MMNATENQIFVETVSDQELEMLIGG) is cleaved from the precursor. 2 positions are modified to 2,3-didehydrobutyrine: T33 and T35. 2 consecutive cross-links (beta-methyllanthionine (Thr-Cys)) follow at residues 33–38 (TLTKDC) and 35–57 (TKDC…CKNC). C46 and C54 are joined by a disulfide.

In terms of processing, maturation of macedovicin involves the enzymatic dehydration of Thr-33 and Thr-35 into dehydrobutyrine residues, that can form a beta-methyllanthionine bond with Cys-38 and Cys-57, respectively. This is followed by membrane translocation and cleavage of the modified precursor.

Its subcellular location is the secreted. In terms of biological role, lanthionine-containing peptide antibiotic (lantibiotic) active on Gram-positive bacteria. Macedovicin inhibits a broad spectrum of lactic acid bacteria, several food spoilage species (e.g. Clostridium spp.) and oral streptococci. The bactericidal activity of lantibiotics is based on depolarization of energized bacterial cytoplasmic membranes, initiated by the formation of aqueous transmembrane pores. This chain is Lantibiotic macedovicin, found in Streptococcus macedonicus (strain ACA-DC 198).